A 264-amino-acid polypeptide reads, in one-letter code: Glutamate 5-kinase (264 aa).

Lysine 9 serves as a coordination point for ATP. The substrate site is built by serine 47, aspartate 132, and asparagine 144. Residues 164-165 (SD) and 206-212 (TGGIVTK) contribute to the ATP site.

It belongs to the glutamate 5-kinase family.

Its subcellular location is the cytoplasm. The catalysed reaction is L-glutamate + ATP = L-glutamyl 5-phosphate + ADP. It participates in amino-acid biosynthesis; L-proline biosynthesis; L-glutamate 5-semialdehyde from L-glutamate: step 1/2. Catalyzes the transfer of a phosphate group to glutamate to form L-glutamate 5-phosphate. This chain is Glutamate 5-kinase, found in Helicobacter hepaticus (strain ATCC 51449 / 3B1).